The chain runs to 550 residues: Glutamyl-tRNA(Gln) amidotransferase subunit A, mitochondrial (550 aa).

Active-site charge relay system residues include Lys79 and Ser171. The Acyl-ester intermediate role is filled by Ser195. Residues 371 to 390 form a disordered region; that stretch reads EKDENKVDNDNDDDDDVDEN.

Belongs to the amidase family. GatA subfamily. Subunit of the heterotrimeric GatCAB amidotransferase (AdT) complex, composed of A, B and C subunits.

The protein resides in the mitochondrion. It catalyses the reaction L-glutamyl-tRNA(Gln) + L-glutamine + ATP + H2O = L-glutaminyl-tRNA(Gln) + L-glutamate + ADP + phosphate + H(+). Functionally, allows the formation of correctly charged Gln-tRNA(Gln) through the transamidation of misacylated Glu-tRNA(Gln) in the mitochondria. The reaction takes place in the presence of glutamine and ATP through an activated gamma-phospho-Glu-tRNA(Gln). The chain is Glutamyl-tRNA(Gln) amidotransferase subunit A, mitochondrial from Dictyostelium discoideum (Social amoeba).